The following is a 287-amino-acid chain: Elongation factor Ts (287 aa).

Residues 80-83 form an involved in Mg(2+) ion dislocation from EF-Tu region; the sequence is TDFL.

The protein belongs to the EF-Ts family.

Its subcellular location is the cytoplasm. In terms of biological role, associates with the EF-Tu.GDP complex and induces the exchange of GDP to GTP. It remains bound to the aminoacyl-tRNA.EF-Tu.GTP complex up to the GTP hydrolysis stage on the ribosome. This is Elongation factor Ts from Pseudomonas putida (strain W619).